The sequence spans 994 residues: Chloride channel protein 1 (994 aa).

Topologically, residues 1–118 are cytoplasmic; that stretch reads MERSQSQQHG…VLRRKLGEDW (118 aa). A disordered region spans residues 37–61; sequence SENGGLQHRPRKDLGPRHNAHPTQI. A helical membrane pass occupies residues 119–150; sequence IFLVLLGLLMALVSWCMDYVSAKSLQAYKWTY. Topologically, residues 151–158 are extracellular; sequence AQMQPSLP. The helical transmembrane segment at 159–179 threads the bilayer; that stretch reads LQYLAWVTFPLILILFSALFC. Over 180-183 the chain is Cytoplasmic; that stretch reads QLIS. The note=Loop between two helices intramembrane region spans 184-189; that stretch reads PQAVGS. The Selectivity filter part_1 signature appears at 188-192; it reads GSGIP. Residue Ser-189 participates in chloride binding. Residues 190-195 constitute an intramembrane region (helical); sequence GIPEMK. Residues 196-208 are Cytoplasmic-facing; that stretch reads TILRGVVLKEYLT. The segment at residues 209–224 is an intramembrane region (helical); sequence LKAFVAKVVALTAGLG. An intramembrane region (note=Loop between two helices) is located at residues 225 to 230; that stretch reads SGIPVG. The Selectivity filter part_2 motif lies at 230 to 234; the sequence is GKEGP. The segment at residues 231–246 is an intramembrane region (helical); the sequence is KEGPFVHIASICAAVL. Residues 247–268 are Cytoplasmic-facing; it reads SKFMSMFSGVYEQPYYYTDILT. 2 intramembrane regions (helical) span residues 269-280 and 281-290; these read VGCAVGVGCCFG and TPLGGVLFSI. Topologically, residues 291-301 are cytoplasmic; the sequence is EVTSTYFAVRN. The helical transmembrane segment at 302 to 321 threads the bilayer; sequence YWRGFFAATFSAFVFRVLAV. Residues 322 to 347 lie on the Extracellular side of the membrane; that stretch reads WNKDAVTITALFRTNFRMDFPFDLKE. A helical transmembrane segment spans residues 348–376; it reads LPAFAVIGICCGFLGAVFVYLHRQVMLGV. The Cytoplasmic portion of the chain corresponds to 377–390; sequence RKHKALSQFLAKHR. A helical transmembrane segment spans residues 391-408; the sequence is LLYPGIVTFVIASLTFPP. Topologically, residues 409 to 414 are extracellular; the sequence is GMGQFM. An intramembrane region (note=Loop between two helices) is located at residues 415–418; it reads AGEL. Positions 419–426 form an intramembrane region, helical; the sequence is MPREAIST. At 427–457 the chain is on the extracellular side; that stretch reads LFDNNTWVKHIGDPKSLGQSAVWIHPQVNVV. The segment at residues 458 to 475 is an intramembrane region (helical); the sequence is IIILLFFVMKFWMSIVAT. Residues 476–482 constitute an intramembrane region (note=Loop between two helices); sequence TMPIPCG. Residues 482–486 carry the Selectivity filter part_3 motif; it reads GGFMP. Positions 483–498 form an intramembrane region, helical; sequence GFMPVFVLGAAFGRLV. Residue Phe-484 coordinates chloride. The Extracellular segment spans residues 499–521; that stretch reads GEIMAMLFPEGILFDDIIYKILP. The segment at residues 522 to 538 is an intramembrane region (helical); sequence GGYAVIGAAALTGAVSH. Positions 539-540 form an intramembrane region, note=Loop between two helices; it reads TV. Positions 541 to 554 form an intramembrane region, helical; sequence STAVICFELTGQIA. The Extracellular portion of the chain corresponds to 555 to 557; sequence HIL. The helical intramembrane region spans 558-571; sequence PMMVAVILANMVAQ. The note=Loop between two helices intramembrane region spans 572–575; it reads SLQP. An intramembrane region (helical) is located at residues 576–578; sequence SLY. Residue Tyr-578 participates in chloride binding. The Cytoplasmic portion of the chain corresponds to 579 to 994; that stretch reads DSIIQVKKLP…DEEDEDELIL (416 aa). Residues 609–668 enclose the CBS 1 domain; sequence MVRDVKFVSASCTYGELRNLLQTTTVKTLPLVDSKDSMILLGSVERSELQSLLQRHLCAE. Disordered regions lie at residues 710-769, 880-923, and 965-994; these read EDED…SADQ, TKSG…DGAP, and NLGP…ELIL. A compositionally biased stretch (pro residues) spans 725–741; sequence TPTPPPPPPPPLPPQFP. In terms of domain architecture, CBS 2 spans 827–882; the sequence is IDQSPFQLVEQTTLHKTHTLFSLLGLHLAYVTSMGKLRGVLALEELQKAIKGHTKS. Ser-892 carries the phosphoserine modification. The segment covering 985 to 994 has biased composition (acidic residues); that stretch reads DEEDEDELIL.

This sequence belongs to the chloride channel (TC 2.A.49) family. ClC-1/CLCN1 subfamily. Homodimer. Predominantly expressed in skeletal muscles.

The protein resides in the cell membrane. The protein localises to the sarcolemma. It localises to the T-tubule. It carries out the reaction chloride(in) = chloride(out). The enzyme catalyses bromide(in) = bromide(out). The catalysed reaction is iodide(out) = iodide(in). It catalyses the reaction thiocyanate(in) = thiocyanate(out). It carries out the reaction nitrate(in) = nitrate(out). Its activity is regulated as follows. Modulated by membrane voltage with depolarization favouring channel opening and hyperpolarization favouring channel closure. Inhibited by acidic pH and ATP binding due to a shift of voltage dependence of common gating to more positive voltages. Inhibited by 9-anthracene-carboxylic acid. Functionally, voltage-gated chloride channel involved in skeletal muscle excitability. Generates most of the plasma membrane chloride conductance in skeletal muscle fibers, stabilizes the resting membrane potential and contributes to the repolarization phase during action potential firing. Forms a homodimeric channel where each subunit has its own ion conduction pathway. Conducts double-barreled currents controlled by two types of gates, two fast glutamate gates that control each subunit independently and a slow common gate that opens and shuts off both subunits simultaneously. Has a significant open probability at muscle resting potential and is further activated upon membrane depolarization. Permeable to small monovalent anions with ion selectivity for chloride &gt; thiocyanate &gt; bromide &gt; nitrate &gt; iodide. In Rattus norvegicus (Rat), this protein is Chloride channel protein 1 (Clcn1).